Consider the following 344-residue polypeptide: Serpentine receptor class alpha-27 (344 aa).

7 helical membrane passes run 28–48 (SIWM…TFYL), 67–87 (QILL…FLEI), 128–148 (GLLS…TVYV), 157–177 (MLIT…YGGV), 203–223 (AIFW…LLNI), 252–272 (ICSV…ALAI), and 287–307 (INIQ…VLIY).

Belongs to the nematode receptor-like protein sra family.

Its subcellular location is the membrane. The sequence is that of Serpentine receptor class alpha-27 (sra-27) from Caenorhabditis elegans.